The following is a 312-amino-acid chain: 1-(5-phosphoribosyl)-5-[(5-phosphoribosylamino)methylideneamino] imidazole-4-carboxamide isomerase HISN3, chloroplastic (312 aa).

A chloroplast-targeting transit peptide spans Met1–Val67. Residue Asp57 participates in 1-(5-phospho-beta-D-ribosyl)-5-[(5-phospho-beta-D-ribosylamino)methylideneamino]imidazole-4-carboxamide binding. Position 65 (Gln65) interacts with 5-[(5-phospho-1-deoxy-D-ribulos-1-ylimino)methylamino]-1-(5-phospho-beta-D-ribosyl)imidazole-4-carboxamide. Residues Gln65 and Ile66 each contribute to the Na(+) site. Gly68 provides a ligand contact to 1-(5-phospho-beta-D-ribosyl)-5-[(5-phospho-beta-D-ribosylamino)methylideneamino]imidazole-4-carboxamide. Residues His108, Gly138, Thr158, and Ser159 each coordinate 5-[(5-phospho-1-deoxy-D-ribulos-1-ylimino)methylamino]-1-(5-phospho-beta-D-ribosyl)imidazole-4-carboxamide. Positions 138, 158, and 159 each coordinate 1-(5-phospho-beta-D-ribosyl)-5-[(5-phospho-beta-D-ribosylamino)methylideneamino]imidazole-4-carboxamide. Na(+)-binding residues include Ser159 and Phe162. The 1-(5-phospho-beta-D-ribosyl)-5-[(5-phospho-beta-D-ribosylamino)methylideneamino]imidazole-4-carboxamide site is built by Asp187, Arg203, Trp204, and His230. Asp187 provides a ligand contact to 5-[(5-phospho-1-deoxy-D-ribulos-1-ylimino)methylamino]-1-(5-phospho-beta-D-ribosyl)imidazole-4-carboxamide. Residue Trp204 coordinates 5-[(5-phospho-1-deoxy-D-ribulos-1-ylimino)methylamino]-1-(5-phospho-beta-D-ribosyl)imidazole-4-carboxamide. Na(+) is bound at residue Glu235. Gly236, Gly262, Gly285, and Ser286 together coordinate 1-(5-phospho-beta-D-ribosyl)-5-[(5-phospho-beta-D-ribosylamino)methylideneamino]imidazole-4-carboxamide. Gly236, Gly262, Gly285, and Ser286 together coordinate 5-[(5-phospho-1-deoxy-D-ribulos-1-ylimino)methylamino]-1-(5-phospho-beta-D-ribosyl)imidazole-4-carboxamide.

This sequence belongs to the HisA/HisF family. Na(+) is required as a cofactor.

It is found in the plastid. The protein localises to the chloroplast. The catalysed reaction is 1-(5-phospho-beta-D-ribosyl)-5-[(5-phospho-beta-D-ribosylamino)methylideneamino]imidazole-4-carboxamide = 5-[(5-phospho-1-deoxy-D-ribulos-1-ylimino)methylamino]-1-(5-phospho-beta-D-ribosyl)imidazole-4-carboxamide. It functions in the pathway amino-acid biosynthesis; L-histidine biosynthesis; L-histidine from 5-phospho-alpha-D-ribose 1-diphosphate: step 4/9. Functionally, component of the histidine biosynthesis pathway that catalyzes the isomerization of 5'-ProFAR (pro-phosphoribosyl formimino-5-aminoimidazole-4-carboxamide ribonucleotide, referred as 1-(5-phospho-beta-D-ribosyl)-5-[(5-phospho-beta-D-ribosylamino)methylideneamino]imidazole-4-carboxamide) to PrFAR (phosphoribulosyl formimino-5-aminoimidazole-4-carboxamide ribonucleotide, referred as 5-[(5-phospho-1-deoxy-D-ribulos-1-ylimino)methylamino]-1-(5-phospho-beta-D-ribosyl)imidazole-4-carboxamide). In Medicago truncatula (Barrel medic), this protein is 1-(5-phosphoribosyl)-5-[(5-phosphoribosylamino)methylideneamino] imidazole-4-carboxamide isomerase HISN3, chloroplastic.